The primary structure comprises 402 residues: 1-deoxy-D-xylulose 5-phosphate reductoisomerase (402 aa).

Residues Thr13, Gly14, Ser15, Ile16, and Asn126 each coordinate NADPH. Lys127 contacts 1-deoxy-D-xylulose 5-phosphate. Glu128 contributes to the NADPH binding site. Mn(2+) is bound at residue Asp152. Positions 153, 154, 188, and 211 each coordinate 1-deoxy-D-xylulose 5-phosphate. Position 154 (Glu154) interacts with Mn(2+). Gly217 contributes to the NADPH binding site. 1-deoxy-D-xylulose 5-phosphate-binding residues include Ser224, Asn229, Lys230, and Glu233. Glu233 is a Mn(2+) binding site.

The protein belongs to the DXR family. The cofactor is Mg(2+). Requires Mn(2+) as cofactor.

It carries out the reaction 2-C-methyl-D-erythritol 4-phosphate + NADP(+) = 1-deoxy-D-xylulose 5-phosphate + NADPH + H(+). It functions in the pathway isoprenoid biosynthesis; isopentenyl diphosphate biosynthesis via DXP pathway; isopentenyl diphosphate from 1-deoxy-D-xylulose 5-phosphate: step 1/6. Its function is as follows. Catalyzes the NADPH-dependent rearrangement and reduction of 1-deoxy-D-xylulose-5-phosphate (DXP) to 2-C-methyl-D-erythritol 4-phosphate (MEP). This is 1-deoxy-D-xylulose 5-phosphate reductoisomerase from Psychrobacter cryohalolentis (strain ATCC BAA-1226 / DSM 17306 / VKM B-2378 / K5).